Consider the following 338-residue polypeptide: Fructose-1,6-bisphosphatase class 1 (338 aa).

Positions 91, 113, 115, and 116 each coordinate Mg(2+). Residues 116-119, Asn-208, and Lys-274 contribute to the substrate site; that span reads DGSS. Glu-280 lines the Mg(2+) pocket.

Belongs to the FBPase class 1 family. Homotetramer. Mg(2+) is required as a cofactor.

The protein resides in the cytoplasm. The enzyme catalyses beta-D-fructose 1,6-bisphosphate + H2O = beta-D-fructose 6-phosphate + phosphate. It participates in carbohydrate biosynthesis; gluconeogenesis. The chain is Fructose-1,6-bisphosphatase class 1 from Ralstonia nicotianae (strain ATCC BAA-1114 / GMI1000) (Ralstonia solanacearum).